Here is a 205-residue protein sequence, read N- to C-terminus: Large ribosomal subunit protein uL3c (205 aa).

Residues 130–150 (RGPMSHGSKNHRQPGSIGAGT) are disordered.

This sequence belongs to the universal ribosomal protein uL3 family. In terms of assembly, part of the 50S ribosomal subunit.

The protein localises to the plastid. Its subcellular location is the chloroplast. One of the primary rRNA binding proteins, it binds directly near the 3'-end of the 23S rRNA, where it nucleates assembly of the 50S subunit. This is Large ribosomal subunit protein uL3c (rpl3) from Gracilaria tenuistipitata var. liui (Red alga).